Here is a 671-residue protein sequence, read N- to C-terminus: Zinc finger protein 568 (671 aa).

Residues 1-31 (MERLSQMAGRRAWCAEDSVPRQEEEDRTRPS) form a disordered region. The segment covering 18–29 (SVPRQEEEDRTR) has biased composition (basic and acidic residues). 2 KRAB domains span residues 34–105 (VTFK…RRSP) and 124–195 (LRFE…IWHP). Residues 214–366 (EKMAKKHTCP…QGSERPHKCK (153 aa)) form a disordered region. Composition is skewed to basic and acidic residues over residues 226 to 251 (EDSK…EGHL), 296 to 312 (IERE…EHAQ), and 329 to 341 (RPQE…ERKK). 11 consecutive C2H2-type zinc fingers follow at residues 363-385 (HKCK…QKLH), 391-413 (YKCQ…HRVH), 419-441 (FECK…QRIH), 447-469 (HKCK…LLTH), 475-497 (FECK…QMSH), 503-525 (HKCK…QSVH), 531-553 (YKCK…QRAH), 559-581 (YKCK…QKVH), 587-609 (HKCK…ERSH), 615-637 (YECK…QKIH), and 643-665 (YKCQ…QRIH).

This sequence belongs to the krueppel C2H2-type zinc-finger protein family. As to quaternary structure, interacts with TRIM28. In terms of tissue distribution, little or no expression detected in most adult tissues (brain, liver, kidney, spleen, testis, ovary). In the hippocampus, detected in neural stem cells within the subventricular zone and subgranular zone.

The protein resides in the nucleus. In terms of biological role, has transcriptional repression activity, partially through the recruitment of the corepressor TRIM28 but also has repression activity independently of this interaction. Essential during embryonic development, where it acts as direct repressor of IGF2-P0, placental-specific transcript of IGF2, in early development and regulates convergent extension movements required for axis elongation and tissue morphogenesis in all germ layers. Also important for normal morphogenesis of extraembryonic tissues including the yolk sac, extraembryonic mesoderm and placenta. May enhance proliferation or maintenance of neural stem cells. The sequence is that of Zinc finger protein 568 from Mus musculus (Mouse).